A 403-amino-acid chain; its full sequence is Phosphopentomutase (403 aa).

Positions 13, 298, 303, 339, 340, and 351 each coordinate Mn(2+).

The protein belongs to the phosphopentomutase family. Mn(2+) is required as a cofactor.

Its subcellular location is the cytoplasm. The catalysed reaction is 2-deoxy-alpha-D-ribose 1-phosphate = 2-deoxy-D-ribose 5-phosphate. It catalyses the reaction alpha-D-ribose 1-phosphate = D-ribose 5-phosphate. Its pathway is carbohydrate degradation; 2-deoxy-D-ribose 1-phosphate degradation; D-glyceraldehyde 3-phosphate and acetaldehyde from 2-deoxy-alpha-D-ribose 1-phosphate: step 1/2. Functionally, isomerase that catalyzes the conversion of deoxy-ribose 1-phosphate (dRib-1-P) and ribose 1-phosphate (Rib-1-P) to deoxy-ribose 5-phosphate (dRib-5-P) and ribose 5-phosphate (Rib-5-P), respectively. This chain is Phosphopentomutase, found in Streptococcus thermophilus (strain CNRZ 1066).